Reading from the N-terminus, the 81-residue chain is Trefoil factor 3 (81 aa).

An N-terminal signal peptide occupies residues 1-22 (METRALWLMLLVVLVAGSSGIA). The P-type domain occupies 31 to 74 (SQCMVPANVRVDCGYPSVTSEQCNNRGCCFDSSIPNVPWCFKPL). Intrachain disulfides connect Cys-33–Cys-59, Cys-43–Cys-58, and Cys-53–Cys-70.

Monomer. Homodimer; disulfide-linked. As to expression, expressed in goblet cells of the intestines and colon (at protein level). Expressed abundantly in goblet cells of intestine and colon, and at low levels in stomach. No expression in brain, lung, spleen, kidney, uterus, pancreas, liver, heart or thymus.

The protein resides in the secreted. It is found in the extracellular space. Its subcellular location is the extracellular matrix. It localises to the cytoplasm. Involved in the maintenance and repair of the intestinal mucosa. Promotes the mobility of epithelial cells in healing processes (motogen). In Mus musculus (Mouse), this protein is Trefoil factor 3 (Tff3).